A 95-amino-acid polypeptide reads, in one-letter code: Co-chaperonin GroES (95 aa).

The protein belongs to the GroES chaperonin family. As to quaternary structure, heptamer of 7 subunits arranged in a ring. Interacts with the chaperonin GroEL.

It localises to the cytoplasm. In terms of biological role, together with the chaperonin GroEL, plays an essential role in assisting protein folding. The GroEL-GroES system forms a nano-cage that allows encapsulation of the non-native substrate proteins and provides a physical environment optimized to promote and accelerate protein folding. GroES binds to the apical surface of the GroEL ring, thereby capping the opening of the GroEL channel. The polypeptide is Co-chaperonin GroES (Chlorobaculum parvum (strain DSM 263 / NCIMB 8327) (Chlorobium vibrioforme subsp. thiosulfatophilum)).